The chain runs to 673 residues: B3 domain-containing protein Os01g0905400 (673 aa).

The segment covering 1–34 (MVELIKVPKIEQEEGNADSHGKEKADVVHEEKTE) has biased composition (basic and acidic residues). The interval 1-44 (MVELIKVPKIEQEEGNADSHGKEKADVVHEEKTEKVKRRRKRVS) is disordered. Residues 79–172 (LPSFFKIMVG…VFTVQIFAIS (94 aa)) constitute a DNA-binding region (TF-B3 1). A disordered region spans residues 315-337 (PSFSYPESSNVMTADKESERSHQ). Basic and acidic residues predominate over residues 328–337 (ADKESERSHQ). A DNA-binding region (TF-B3 2) is located at residues 576–671 (SKKFCITIPP…ELSFQVLVPN (96 aa)).

It is found in the nucleus. The sequence is that of B3 domain-containing protein Os01g0905400 from Oryza sativa subsp. japonica (Rice).